The sequence spans 786 residues: Kazrin-A (786 aa).

A disordered region spans residues 44–70 (EEPGEPQEHQQQQQQQNHQDAPVQRQK). Residues 52–62 (HQQQQQQQNHQ) show a composition bias toward low complexity. Positions 92–270 (LLHEEVLRLQ…SLATLTKDVP (179 aa)) form a coiled coil. The tract at residues 350 to 425 (MSDASVMEGE…LFDDSDSLSS (76 aa)) is disordered. 3 consecutive SAM domains span residues 457 to 522 (WRAG…YRDA), 535 to 599 (DHHW…LHTL), and 623 to 686 (WTCQ…SEEM). Residues 703–760 (PLGTPPTLHRQSSLSSSSPSCHDDQQSLRRVKQQLGLSPKNLTARNISHQSRSGSFPR) form a disordered region. Positions 742-758 (KNLTARNISHQSRSGSF) are enriched in polar residues.

Belongs to the kazrin family.

This Danio rerio (Zebrafish) protein is Kazrin-A (kazna).